A 388-amino-acid chain; its full sequence is Dual-specificity RNA methyltransferase RlmN (388 aa).

E109 acts as the Proton acceptor in catalysis. The 240-residue stretch at 115–354 folds into the Radical SAM core domain; that stretch reads EDDRATLCVS…TIVRKTRGDD (240 aa). Cysteines 122 and 359 form a disulfide. Residues C129, C133, and C136 each coordinate [4Fe-4S] cluster. Residues 183-184, S215, 237-239, and N316 contribute to the S-adenosyl-L-methionine site; these read GE and SLH. C359 functions as the S-methylcysteine intermediate in the catalytic mechanism.

It belongs to the radical SAM superfamily. RlmN family. It depends on [4Fe-4S] cluster as a cofactor.

Its subcellular location is the cytoplasm. It catalyses the reaction adenosine(2503) in 23S rRNA + 2 reduced [2Fe-2S]-[ferredoxin] + 2 S-adenosyl-L-methionine = 2-methyladenosine(2503) in 23S rRNA + 5'-deoxyadenosine + L-methionine + 2 oxidized [2Fe-2S]-[ferredoxin] + S-adenosyl-L-homocysteine. The enzyme catalyses adenosine(37) in tRNA + 2 reduced [2Fe-2S]-[ferredoxin] + 2 S-adenosyl-L-methionine = 2-methyladenosine(37) in tRNA + 5'-deoxyadenosine + L-methionine + 2 oxidized [2Fe-2S]-[ferredoxin] + S-adenosyl-L-homocysteine. Functionally, specifically methylates position 2 of adenine 2503 in 23S rRNA and position 2 of adenine 37 in tRNAs. m2A2503 modification seems to play a crucial role in the proofreading step occurring at the peptidyl transferase center and thus would serve to optimize ribosomal fidelity. In Salmonella typhimurium (strain LT2 / SGSC1412 / ATCC 700720), this protein is Dual-specificity RNA methyltransferase RlmN.